The primary structure comprises 157 residues: Protein SINE4 (157 aa).

One can recognise a KASH domain in the interval 104–157 (VTSSSDTTKAKKKTTIRRFVSVTMVLLLSWVLVVLMNHFDHLSMNTQIITLVPT). A helical transmembrane segment spans residues 122–142 (FVSVTMVLLLSWVLVVLMNHF). Positions 154–157 (LVPT) match the Required for nuclear localization motif.

As to quaternary structure, interacts with SUN1 and SUN2.

The protein resides in the nucleus membrane. This Arabidopsis thaliana (Mouse-ear cress) protein is Protein SINE4.